The primary structure comprises 185 residues: Peptidyl-tRNA hydrolase (185 aa).

Residue tyrosine 14 coordinates tRNA. The active-site Proton acceptor is histidine 19. Positions 64, 66, and 112 each coordinate tRNA.

The protein belongs to the PTH family. Monomer.

It is found in the cytoplasm. The enzyme catalyses an N-acyl-L-alpha-aminoacyl-tRNA + H2O = an N-acyl-L-amino acid + a tRNA + H(+). Its function is as follows. Hydrolyzes ribosome-free peptidyl-tRNAs (with 1 or more amino acids incorporated), which drop off the ribosome during protein synthesis, or as a result of ribosome stalling. Catalyzes the release of premature peptidyl moieties from peptidyl-tRNA molecules trapped in stalled 50S ribosomal subunits, and thus maintains levels of free tRNAs and 50S ribosomes. The sequence is that of Peptidyl-tRNA hydrolase from Exiguobacterium sibiricum (strain DSM 17290 / CCUG 55495 / CIP 109462 / JCM 13490 / 255-15).